The primary structure comprises 341 residues: Methionine import ATP-binding protein MetN 2 (341 aa).

An ABC transporter domain is found at 2 to 241 (INLQNVSKIY…PKEEMTKRFV (240 aa)). 38–45 (GYSGAGKS) contributes to the ATP binding site.

This sequence belongs to the ABC transporter superfamily. Methionine importer (TC 3.A.1.24) family. As to quaternary structure, the complex is composed of two ATP-binding proteins (MetN), two transmembrane proteins (MetI) and a solute-binding protein (MetQ).

It localises to the cell membrane. It carries out the reaction L-methionine(out) + ATP + H2O = L-methionine(in) + ADP + phosphate + H(+). The catalysed reaction is D-methionine(out) + ATP + H2O = D-methionine(in) + ADP + phosphate + H(+). Functionally, part of the ABC transporter complex MetNIQ involved in methionine import. Responsible for energy coupling to the transport system. The sequence is that of Methionine import ATP-binding protein MetN 2 from Bacillus licheniformis (strain ATCC 14580 / DSM 13 / JCM 2505 / CCUG 7422 / NBRC 12200 / NCIMB 9375 / NCTC 10341 / NRRL NRS-1264 / Gibson 46).